A 150-amino-acid chain; its full sequence is 3-dehydroquinate dehydratase (150 aa).

Tyrosine 26 functions as the Proton acceptor in the catalytic mechanism. Substrate-binding residues include asparagine 77, histidine 83, and aspartate 90. The active-site Proton donor is the histidine 103. Substrate contacts are provided by residues leucine 104–serine 105 and arginine 114.

It belongs to the type-II 3-dehydroquinase family. In terms of assembly, homododecamer.

It catalyses the reaction 3-dehydroquinate = 3-dehydroshikimate + H2O. It functions in the pathway metabolic intermediate biosynthesis; chorismate biosynthesis; chorismate from D-erythrose 4-phosphate and phosphoenolpyruvate: step 3/7. Catalyzes a trans-dehydration via an enolate intermediate. The chain is 3-dehydroquinate dehydratase from Yersinia pseudotuberculosis serotype O:1b (strain IP 31758).